The following is a 375-amino-acid chain: Probable protein-glutamate methylesterase BB_0415 (375 aa).

In terms of domain architecture, Response regulatory spans 6–120 (SVLIIEYFAV…SHEIKKEQII (115 aa)). The region spanning 183-375 (KLRKFDIIAI…KLLKAILINS (193 aa)) is the CheB-type methylesterase domain. Residues S195, H221, and D317 contribute to the active site.

It catalyses the reaction [protein]-L-glutamate 5-O-methyl ester + H2O = L-glutamyl-[protein] + methanol + H(+). The protein is Probable protein-glutamate methylesterase BB_0415 of Borreliella burgdorferi (strain ATCC 35210 / DSM 4680 / CIP 102532 / B31) (Borrelia burgdorferi).